A 250-amino-acid polypeptide reads, in one-letter code: Probable transcriptional regulatory protein Cpha266_0538 (250 aa).

It belongs to the TACO1 family.

The protein resides in the cytoplasm. The protein is Probable transcriptional regulatory protein Cpha266_0538 of Chlorobium phaeobacteroides (strain DSM 266 / SMG 266 / 2430).